We begin with the raw amino-acid sequence, 554 residues long: HMG box-containing protein 4 (554 aa).

Disordered regions lie at residues 14-34 (RGME…KRSY), 47-368 (QVRK…SAYQ), and 418-468 (HKQN…SPAK). A compositionally biased stretch (polar residues) spans 117–127 (TSPQVDTSTTH). Positions 221–230 (TGREETESRS) are enriched in basic and acidic residues. Residues 242–255 (PRSGGTPDSASSTG) are compositionally biased toward polar residues. Over residues 272-300 (MKKKKKSKKSKKKKDKHKDEKHRKHSKSK) the composition is skewed to basic residues. Positions 317–335 (LPSPPPPTATTPTSPPSVP) are enriched in pro residues. A compositionally biased stretch (basic and acidic residues) spans 342–358 (HAEEQLDKKKKKEDPEK). The HMG box DNA-binding region spans 360–428 (KKKNMSAYQV…KQNKAEATTV (69 aa)). Positions 434–466 (SSESAARSKGSSSGLPSPNKKSPTSVVSFSTSP) are enriched in low complexity.

Interacts with nlk.2.

The protein localises to the nucleus. Functionally, negatively regulates Wnt/beta-catenin signaling during development. This chain is HMG box-containing protein 4 (hmgxb4), found in Xenopus tropicalis (Western clawed frog).